Reading from the N-terminus, the 451-residue chain is Chromosomal replication initiator protein DnaA (451 aa).

The segment at 1–71 (MSEKEIWDKV…QAIIYDVIGY (71 aa)) is domain I, interacts with DnaA modulators. A domain II region spans residues 71-112 (YEVKPHFISEDELASYNNVNTQEVQEPQVQHSSIDDKTWGKE). Positions 113-329 (QFNMHNTFDT…GALTRLLAYS (217 aa)) are domain III, AAA+ region. ATP contacts are provided by glycine 157, glycine 159, lysine 160, and threonine 161. The interval 330–451 (KLQGKPITTE…ENLEKEIRNQ (122 aa)) is domain IV, binds dsDNA.

The protein belongs to the DnaA family. In terms of assembly, oligomerizes as a right-handed, spiral filament on DNA at oriC.

It localises to the cytoplasm. Plays an essential role in the initiation and regulation of chromosomal replication. ATP-DnaA binds to the origin of replication (oriC) to initiate formation of the DNA replication initiation complex once per cell cycle. Binds the DnaA box (a 9 base pair repeat at the origin) and separates the double-stranded (ds)DNA. Forms a right-handed helical filament on oriC DNA; dsDNA binds to the exterior of the filament while single-stranded (ss)DNA is stabiized in the filament's interior. The ATP-DnaA-oriC complex binds and stabilizes one strand of the AT-rich DNA unwinding element (DUE), permitting loading of DNA polymerase. After initiation quickly degrades to an ADP-DnaA complex that is not apt for DNA replication. Binds acidic phospholipids. The protein is Chromosomal replication initiator protein DnaA of Staphylococcus epidermidis (strain ATCC 35984 / DSM 28319 / BCRC 17069 / CCUG 31568 / BM 3577 / RP62A).